We begin with the raw amino-acid sequence, 545 residues long: Betaine receptor acr-23 (545 aa).

Positions 1–19 are cleaved as a signal peptide; the sequence is MHRIYTFLIFISQLALGLS. Residues 20–244 are Extracellular-facing; sequence NNPDIPIQYE…DVVIQRKPLY (225 aa). N-linked (GlcNAc...) asparagine glycosylation is found at asparagine 53 and asparagine 97. Cystine bridges form between cysteine 157–cysteine 171 and cysteine 224–cysteine 225. N-linked (GlcNAc...) asparagine glycosylation is present at asparagine 228. A helical transmembrane segment spans residues 245–265; sequence YVLNLIAPTAVITFISIIGFF. N-linked (GlcNAc...) asparagine glycosylation occurs at asparagine 276. The next 2 membrane-spanning stretches (helical) occupy residues 287 to 307 and 317 to 337; these read EKIT…FMVS and VPLI…GTLA. Over 338–512 the chain is Cytoplasmic; that stretch reads ASSVIFVQKL…WDWVAAVLER (175 aa). The chain crosses the membrane as a helical span at residues 513–533; that stretch reads VFLIFFTICFLFSAIGINLYG.

The protein belongs to the ligand-gated ion channel (TC 1.A.9) family. Acetylcholine receptor (TC 1.A.9.1) subfamily. As to expression, expressed in the body wall muscles that are arranged into four longitudinal bundles, some mechanosensory neurons, the head muscles and multiple interneurons. Not expressed in motor neurons (at protein level).

It localises to the cell membrane. Its function is as follows. Betaine receptor that functions as a ligand-gated non-selective monovalent cation channel in mechanosensory neurons to maintain basal levels of locomotion. The channel is permeable to Na(+) and K(+) but not to Ba(2+) or Ca(2+) ions. Elicits current in response to betaine, very weak current in response to choline, virtually no current in response to acetylcholine and nicotine, and no current in response to glycine and GABA. This Caenorhabditis elegans protein is Betaine receptor acr-23.